Consider the following 255-residue polypeptide: Triosephosphate isomerase (255 aa).

15-17 (NWK) lines the substrate pocket. The Electrophile role is filled by His100. Residue Glu172 is the Proton acceptor of the active site. Substrate contacts are provided by residues Gly178, Ser218, and 239–240 (GG).

The protein belongs to the triosephosphate isomerase family. In terms of assembly, homodimer.

The protein resides in the cytoplasm. The catalysed reaction is D-glyceraldehyde 3-phosphate = dihydroxyacetone phosphate. The protein operates within carbohydrate biosynthesis; gluconeogenesis. It functions in the pathway carbohydrate degradation; glycolysis; D-glyceraldehyde 3-phosphate from glycerone phosphate: step 1/1. Its function is as follows. Involved in the gluconeogenesis. Catalyzes stereospecifically the conversion of dihydroxyacetone phosphate (DHAP) to D-glyceraldehyde-3-phosphate (G3P). The chain is Triosephosphate isomerase from Clostridium tetani (strain Massachusetts / E88).